We begin with the raw amino-acid sequence, 1317 residues long: uncharacterized protein (1317 aa).

It belongs to the oxoprolinase family.

This is an uncharacterized protein from Schizosaccharomyces pombe (strain 972 / ATCC 24843) (Fission yeast).